The chain runs to 156 residues: Small ribosomal subunit protein uS7 (156 aa).

Belongs to the universal ribosomal protein uS7 family. In terms of assembly, part of the 30S ribosomal subunit. Contacts proteins S9 and S11.

Functionally, one of the primary rRNA binding proteins, it binds directly to 16S rRNA where it nucleates assembly of the head domain of the 30S subunit. Is located at the subunit interface close to the decoding center, probably blocks exit of the E-site tRNA. This Campylobacter jejuni subsp. jejuni serotype O:6 (strain 81116 / NCTC 11828) protein is Small ribosomal subunit protein uS7.